A 479-amino-acid polypeptide reads, in one-letter code: Protein nucleotidyltransferase YdiU (479 aa).

Positions 83, 85, 86, 106, 118, 119, 169, and 176 each coordinate ATP. Residue Asp245 is the Proton acceptor of the active site. Asn246 and Asp255 together coordinate Mg(2+). Asp255 is an ATP binding site.

Belongs to the SELO family. It depends on Mg(2+) as a cofactor. Requires Mn(2+) as cofactor.

It carries out the reaction L-seryl-[protein] + ATP = 3-O-(5'-adenylyl)-L-seryl-[protein] + diphosphate. The catalysed reaction is L-threonyl-[protein] + ATP = 3-O-(5'-adenylyl)-L-threonyl-[protein] + diphosphate. It catalyses the reaction L-tyrosyl-[protein] + ATP = O-(5'-adenylyl)-L-tyrosyl-[protein] + diphosphate. The enzyme catalyses L-histidyl-[protein] + UTP = N(tele)-(5'-uridylyl)-L-histidyl-[protein] + diphosphate. It carries out the reaction L-seryl-[protein] + UTP = O-(5'-uridylyl)-L-seryl-[protein] + diphosphate. The catalysed reaction is L-tyrosyl-[protein] + UTP = O-(5'-uridylyl)-L-tyrosyl-[protein] + diphosphate. Functionally, nucleotidyltransferase involved in the post-translational modification of proteins. It can catalyze the addition of adenosine monophosphate (AMP) or uridine monophosphate (UMP) to a protein, resulting in modifications known as AMPylation and UMPylation. In Erwinia tasmaniensis (strain DSM 17950 / CFBP 7177 / CIP 109463 / NCPPB 4357 / Et1/99), this protein is Protein nucleotidyltransferase YdiU.